The following is a 291-amino-acid chain: Zinc transporter ZupT (291 aa).

The next 8 membrane-spanning stretches (helical) occupy residues 8–28 (IFIA…GSII), 39–59 (VLSL…FMEI), 74–94 (HWAE…SLLI), 147–167 (GIFT…ATFI), 174–194 (TLGI…GLAV), 209–229 (FIYS…GALI), 233–253 (FIGD…MVFI), and 271–291 (SLYG…LLGQ). Fe(2+) is bound by residues asparagine 158 and glutamate 161. Residues glutamate 161 and histidine 186 each contribute to the Zn(2+) site. Fe(2+) contacts are provided by asparagine 187, glutamate 190, and glutamate 219. Glutamate 190 serves as a coordination point for Zn(2+).

The protein belongs to the ZIP transporter (TC 2.A.5) family. ZupT subfamily.

It localises to the cell inner membrane. It carries out the reaction Zn(2+)(in) = Zn(2+)(out). Its function is as follows. Mediates zinc uptake. May also transport other divalent cations. This is Zinc transporter ZupT from Campylobacter jejuni subsp. jejuni serotype O:2 (strain ATCC 700819 / NCTC 11168).